Reading from the N-terminus, the 630-residue chain is tRNA uridine 5-carboxymethylaminomethyl modification enzyme MnmG (630 aa).

FAD is bound at residue 15–20 (GAGHAG). 274–288 (GPRYCPSIEDKIVRF) is a binding site for NAD(+).

It belongs to the MnmG family. Homodimer. Heterotetramer of two MnmE and two MnmG subunits. The cofactor is FAD.

It is found in the cytoplasm. Its function is as follows. NAD-binding protein involved in the addition of a carboxymethylaminomethyl (cmnm) group at the wobble position (U34) of certain tRNAs, forming tRNA-cmnm(5)s(2)U34. This chain is tRNA uridine 5-carboxymethylaminomethyl modification enzyme MnmG, found in Alkaliphilus oremlandii (strain OhILAs) (Clostridium oremlandii (strain OhILAs)).